The following is a 326-amino-acid chain: Metallophosphoesterase domain-containing protein 1 (326 aa).

It belongs to the UPF0046 family. As to expression, expressed predominantly in adult brain.

Functionally, may have metallophosphoesterase activity (in vitro). The protein is Metallophosphoesterase domain-containing protein 1 (MPPED1) of Homo sapiens (Human).